A 1021-amino-acid chain; its full sequence is Sodium/potassium-transporting ATPase subunit alpha-1 (1021 aa).

The propeptide occupies 1–5 (MGKGV). Basic and acidic residues predominate over residues 1–11 (MGKGVGRDKYE). The tract at residues 1–36 (MGKGVGRDKYEPAAVSEHGDKKKAKKERDMDELKKE) is disordered. Topologically, residues 6 to 85 (GRDKYEPAAV…NALTPPPTTP (80 aa)) are cytoplasmic. Lys9 bears the N6-acetyllysine mark. Tyr10 bears the Phosphotyrosine mark. Ser16 is subject to Phosphoserine; by PKC. Lys21 carries the post-translational modification N6-acetyllysine. A compositionally biased stretch (basic and acidic residues) spans 26–36 (KERDMDELKKE). A phosphoserine mark is found at Ser38 and Ser45. The interval 80 to 82 (PPP) is phosphoinositide-3 kinase binding. Residues 86 to 106 (EWVKFCRQLFGGFSMLLWIGA) form a helical membrane-spanning segment. Residues 107–129 (VLCFLAYGIQAATEEEPQNDNLY) are Extracellular-facing. A helical membrane pass occupies residues 130 to 150 (LGVVLSAVVIITGCFSYYQEA). The Cytoplasmic portion of the chain corresponds to 151-286 (KSSKIMESFK…GGQTPIAAEI (136 aa)). Ser226 bears the Phosphoserine mark. Tyr258 bears the Phosphotyrosine mark. Residues 287 to 306 (EHFIHIITGVAVFLGVSFFI) traverse the membrane as a helical segment. At 307–318 (LSLILEYTWLEA) the chain is on the extracellular side. The chain crosses the membrane as a helical span at residues 319-336 (VIFLIGIIVANVPEGLLA). Residues 337 to 770 (TVTVCLTLTA…EEGRLIFDNL (434 aa)) lie on the Cytoplasmic side of the membrane. Asp374 functions as the 4-aspartylphosphate intermediate in the catalytic mechanism. Phosphoserine occurs at positions 450 and 482. Residue Lys485 participates in ATP binding. Position 540 is a phosphotyrosine (Tyr540). The mediates interaction with SCN7A stretch occupies residues 594–715 (RAAVPDAVGK…QGAIVAVTGD (122 aa)). Ser666 carries the post-translational modification Phosphoserine. The Mg(2+) site is built by Asp715 and Asp719. A helical transmembrane segment spans residues 771–790 (KKSIAYTLTSNIPEITPFLI). Topologically, residues 791 to 800 (FIIANIPLPL) are extracellular. The chain crosses the membrane as a helical span at residues 801–821 (GTVTILCIDLGTDMVPAISLA). The Cytoplasmic segment spans residues 822-841 (YEQAESDIMKRQPRNPQTDK). Residues 842 to 864 (LVNERLISMAYGQIGMIQALGGF) traverse the membrane as a helical segment. Over 865–916 (FTYFVIMAENGFLPNHLLGIRVTWDDRWINDVEDSYGQQWTYEQRKIVEFTC) the chain is Extracellular. A helical membrane pass occupies residues 917-936 (HTAFFVSIVVVQWADLVICK). Residues 937–949 (TRRNSVFQQGMKN) are Cytoplasmic-facing. Ser941 carries the phosphoserine; by PKA modification. A helical transmembrane segment spans residues 950 to 968 (KILIFGLFEETALAAFLSY). Residues 969–983 (CPGMGVALRMYPLKP) lie on the Extracellular side of the membrane. The helical transmembrane segment at 984–1004 (TWWFCAFPYSLLIFVYDEVRK) threads the bilayer. Residues 1005-1021 (LIIRRRPGGWVEKETYY) are Cytoplasmic-facing.

The protein belongs to the cation transport ATPase (P-type) (TC 3.A.3) family. Type IIC subfamily. As to quaternary structure, the sodium/potassium-transporting ATPase is composed of a catalytic alpha subunit, an auxiliary non-catalytic beta subunit and an additional regulatory subunit. Interacts with regulatory subunit FXYD1. Interacts with regulatory subunit FXYD3. Interacts with SIK1. Interacts with SLC35G1 and STIM1. Interacts with CLN3; this interaction regulates the sodium/potassium-transporting ATPase complex localization at the plasma membrane. Interacts with SCN7A; activates ATP1A1 P-type sodium:potassium-exchanging transporter activity which indirectly signals to nearby neurons to regulate sodium homeostasis. Post-translationally, phosphorylation on Tyr-10 modulates pumping activity. Phosphorylation of Ser-941 by PKA modulates the response of ATP1A1 to PKC. Dephosphorylation by protein phosphatase 2A (PP2A) following increases in intracellular sodium, leading to increase catalytic activity.

Its subcellular location is the cell membrane. It is found in the basolateral cell membrane. The protein resides in the sarcolemma. It localises to the cell projection. The protein localises to the axon. Its subcellular location is the melanosome. The enzyme catalyses K(+)(out) + Na(+)(in) + ATP + H2O = K(+)(in) + Na(+)(out) + ADP + phosphate + H(+). Its function is as follows. This is the catalytic component of the active enzyme, which catalyzes the hydrolysis of ATP coupled with the exchange of sodium and potassium ions across the plasma membrane. This action creates the electrochemical gradient of sodium and potassium ions, providing the energy for active transport of various nutrients. Could also be part of an osmosensory signaling pathway that senses body-fluid sodium levels and controls salt intake behavior as well as voluntary water intake to regulate sodium homeostasis. The protein is Sodium/potassium-transporting ATPase subunit alpha-1 (ATP1A1) of Bos taurus (Bovine).